A 122-amino-acid polypeptide reads, in one-letter code: MSDNLSQADILARVAATLESRKPENGGDPEKSYVAKLFKKGDDAILKKIGEEATETVMAAKDARAADLADEAVSKVVYEVADLWFHTMVLLARIGRTPEDVVNELARREGLSGLVEKASRKE.

The protein belongs to the PRA-PH family.

The protein localises to the cytoplasm. The enzyme catalyses 1-(5-phospho-beta-D-ribosyl)-ATP + H2O = 1-(5-phospho-beta-D-ribosyl)-5'-AMP + diphosphate + H(+). It participates in amino-acid biosynthesis; L-histidine biosynthesis; L-histidine from 5-phospho-alpha-D-ribose 1-diphosphate: step 2/9. This is Phosphoribosyl-ATP pyrophosphatase from Cupriavidus metallidurans (strain ATCC 43123 / DSM 2839 / NBRC 102507 / CH34) (Ralstonia metallidurans).